Reading from the N-terminus, the 177-residue chain is MAELTTIARPYAKAAFDIAVEHNAVDNWAEMLTFAALVSENETMKPLLTGSLASTKLAALFISVCGEQINEQGQNLIKVMAENGRLKVLPAVSELFAQYRNEWAKEVEADVVSAAELSSEQQQQISISLEKRLARKVKLNCSTDAALIAGVIIKAGDLVIDGSVRGKLSRLSEKLQS.

Belongs to the ATPase delta chain family. In terms of assembly, F-type ATPases have 2 components, F(1) - the catalytic core - and F(0) - the membrane proton channel. F(1) has five subunits: alpha(3), beta(3), gamma(1), delta(1), epsilon(1). F(0) has three main subunits: a(1), b(2) and c(10-14). The alpha and beta chains form an alternating ring which encloses part of the gamma chain. F(1) is attached to F(0) by a central stalk formed by the gamma and epsilon chains, while a peripheral stalk is formed by the delta and b chains.

It localises to the cell inner membrane. F(1)F(0) ATP synthase produces ATP from ADP in the presence of a proton or sodium gradient. F-type ATPases consist of two structural domains, F(1) containing the extramembraneous catalytic core and F(0) containing the membrane proton channel, linked together by a central stalk and a peripheral stalk. During catalysis, ATP synthesis in the catalytic domain of F(1) is coupled via a rotary mechanism of the central stalk subunits to proton translocation. Its function is as follows. This protein is part of the stalk that links CF(0) to CF(1). It either transmits conformational changes from CF(0) to CF(1) or is implicated in proton conduction. The polypeptide is ATP synthase subunit delta (Shewanella oneidensis (strain ATCC 700550 / JCM 31522 / CIP 106686 / LMG 19005 / NCIMB 14063 / MR-1)).